A 143-amino-acid polypeptide reads, in one-letter code: Deoxyuridine 5'-triphosphate nucleotidohydrolase (143 aa).

Substrate-binding positions include 62-64 (RSG), N75, and 79-81 (TID).

It belongs to the dUTPase family. It depends on Mg(2+) as a cofactor.

The enzyme catalyses dUTP + H2O = dUMP + diphosphate + H(+). The protein operates within pyrimidine metabolism; dUMP biosynthesis; dUMP from dCTP (dUTP route): step 2/2. Functionally, this enzyme is involved in nucleotide metabolism: it produces dUMP, the immediate precursor of thymidine nucleotides and it decreases the intracellular concentration of dUTP so that uracil cannot be incorporated into DNA. The polypeptide is Deoxyuridine 5'-triphosphate nucleotidohydrolase (Acaryochloris marina (strain MBIC 11017)).